We begin with the raw amino-acid sequence, 293 residues long: 4-hydroxy-tetrahydrodipicolinate synthase (293 aa).

Threonine 45 contacts pyruvate. Residue tyrosine 133 is the Proton donor/acceptor of the active site. The active-site Schiff-base intermediate with substrate is lysine 161. A pyruvate-binding site is contributed by isoleucine 203.

The protein belongs to the DapA family. Homotetramer; dimer of dimers.

It is found in the cytoplasm. The enzyme catalyses L-aspartate 4-semialdehyde + pyruvate = (2S,4S)-4-hydroxy-2,3,4,5-tetrahydrodipicolinate + H2O + H(+). It functions in the pathway amino-acid biosynthesis; L-lysine biosynthesis via DAP pathway; (S)-tetrahydrodipicolinate from L-aspartate: step 3/4. Functionally, catalyzes the condensation of (S)-aspartate-beta-semialdehyde [(S)-ASA] and pyruvate to 4-hydroxy-tetrahydrodipicolinate (HTPA). The polypeptide is 4-hydroxy-tetrahydrodipicolinate synthase (Aliivibrio fischeri (strain ATCC 700601 / ES114) (Vibrio fischeri)).